We begin with the raw amino-acid sequence, 891 residues long: Protein translocase subunit SecA (891 aa).

ATP-binding positions include Gln83, 101–105, and Asp489; that span reads GEGKT.

The protein belongs to the SecA family.

The protein localises to the plastid. It localises to the chloroplast stroma. Its subcellular location is the chloroplast thylakoid membrane. It carries out the reaction ATP + H2O + cellular proteinSide 1 = ADP + phosphate + cellular proteinSide 2.. Its function is as follows. Has a central role in coupling the hydrolysis of ATP to the transfer of proteins across the thylakoid membrane. The protein is Protein translocase subunit SecA of Diacronema lutheri (Unicellular marine alga).